Here is a 393-residue protein sequence, read N- to C-terminus: tRNA(Met) cytidine acetate ligase (393 aa).

The ATP site is built by Gly81, Asn142, and Arg167.

Belongs to the TmcAL family.

The protein resides in the cytoplasm. It catalyses the reaction cytidine(34) in elongator tRNA(Met) + acetate + ATP = N(4)-acetylcytidine(34) in elongator tRNA(Met) + AMP + diphosphate. Functionally, catalyzes the formation of N(4)-acetylcytidine (ac(4)C) at the wobble position of elongator tRNA(Met), using acetate and ATP as substrates. First activates an acetate ion to form acetyladenylate (Ac-AMP) and then transfers the acetyl group to tRNA to form ac(4)C34. This is tRNA(Met) cytidine acetate ligase from Bacillus cereus (strain ATCC 10987 / NRS 248).